The chain runs to 517 residues: Putative succinate-semialdehyde dehydrogenase [NADP(+)] (517 aa).

NADP(+)-binding positions include 157–158 (WN), 181–184 (KPDS), and 232–233 (GS). Glutamate 254 serves as the catalytic Proton acceptor. Leucine 255 lines the NADP(+) pocket. Cysteine 288 acts as the Nucleophile in catalysis. Glutamate 386 contacts NADP(+).

The protein belongs to the aldehyde dehydrogenase family.

The catalysed reaction is succinate semialdehyde + NADP(+) + H2O = succinate + NADPH + 2 H(+). Functionally, catalyzes the NADP(+)-dependent oxidation of succinate semialdehyde to succinate. Although it has succinate semialdehyde dehydrogenase activity, is likely to act physiologically on a different aldehyde(s). This chain is Putative succinate-semialdehyde dehydrogenase [NADP(+)] (gabD2), found in Mycolicibacterium smegmatis (strain ATCC 700084 / mc(2)155) (Mycobacterium smegmatis).